The sequence spans 498 residues: Beta-1,3-glucosyltransferase (498 aa).

The Cytoplasmic segment spans residues 1-6 (MRPPAC). The helical; Signal-anchor for type II membrane protein transmembrane segment at 7–27 (WWLLAPPALLALLTCSLAFGL) threads the bilayer. Residues 28 to 498 (ASEDTKKEVK…ETQKGFREEL (471 aa)) lie on the Lumenal side of the membrane. Residue Asn-336 is glycosylated (N-linked (GlcNAc...) asparagine). The Prevents secretion from ER motif lies at 495–498 (REEL).

This sequence belongs to the glycosyltransferase 31 family. In terms of tissue distribution, widely expressed, with highest levels in testis and uterus.

The protein resides in the endoplasmic reticulum membrane. Its pathway is protein modification; protein glycosylation. O-glucosyltransferase that transfers glucose toward fucose with a beta-1,3 linkage. Specifically glucosylates O-linked fucosylglycan on TSP type-1 domains of proteins, thereby contributing to elongation of O-fucosylglycan. This Homo sapiens (Human) protein is Beta-1,3-glucosyltransferase.